The primary structure comprises 287 residues: 4-hydroxybenzoate octaprenyltransferase (287 aa).

6 helical membrane passes run 41–61, 89–109, 133–153, 158–178, 202–224, and 266–286; these read WPLL…GCAM, WEAV…ILPL, FFAI…PMAF, DTVP…SVAY, FGRF…YVWI, and HNNW…LLAG.

This sequence belongs to the UbiA prenyltransferase family. Requires Mg(2+) as cofactor.

Its subcellular location is the cell inner membrane. The enzyme catalyses all-trans-octaprenyl diphosphate + 4-hydroxybenzoate = 4-hydroxy-3-(all-trans-octaprenyl)benzoate + diphosphate. Its pathway is cofactor biosynthesis; ubiquinone biosynthesis. Catalyzes the prenylation of para-hydroxybenzoate (PHB) with an all-trans polyprenyl group. Mediates the second step in the final reaction sequence of ubiquinone-8 (UQ-8) biosynthesis, which is the condensation of the polyisoprenoid side chain with PHB, generating the first membrane-bound Q intermediate 3-octaprenyl-4-hydroxybenzoate. The protein is 4-hydroxybenzoate octaprenyltransferase of Burkholderia orbicola (strain MC0-3).